We begin with the raw amino-acid sequence, 220 residues long: Urease accessory protein UreF (220 aa).

Belongs to the UreF family. UreD, UreF and UreG form a complex that acts as a GTP-hydrolysis-dependent molecular chaperone, activating the urease apoprotein by helping to assemble the nickel containing metallocenter of UreC. The UreE protein probably delivers the nickel.

Its subcellular location is the cytoplasm. In terms of biological role, required for maturation of urease via the functional incorporation of the urease nickel metallocenter. This Jannaschia sp. (strain CCS1) protein is Urease accessory protein UreF.